Here is a 290-residue protein sequence, read N- to C-terminus: MNSGYLHFPEFDPVIFSIGPVALHWYGLMYLVGFIFAMWLAGRRAGRPGSGWTKNEVENLLYAGFLGVFLGGRIGYVLFYNFPTFLSDPLYLFRVWDGGMSFHGGLIGVILVMVIFAKRTKRNFFQVADFMAPLIPFGLGAGRLGNFINGELWGRVDPSVPYTMLFPASRAEDIALLPSHPEWQSIFDTYGVLPRHMSQLYELALEGVVLFIILNLFIRKPRPMGSVSGLFLIGYGAFRIIVEFFRQPDAQFTGEWVQYISMGQILSIPMIVAGIIMMIWAYRRPQQQLS.

The next 7 membrane-spanning stretches (helical) occupy residues 21–41, 60–80, 96–116, 124–144, 198–218, 225–245, and 260–280; these read VALHWYGLMYLVGFIFAMWLA, LLYAGFLGVFLGGRIGYVLFY, WDGGMSFHGGLIGVILVMVIF, FFQVADFMAPLIPFGLGAGRL, SQLYELALEGVVLFIILNLFI, GSVSGLFLIGYGAFRIIVEFF, and ISMGQILSIPMIVAGIIMMIW. R143 provides a ligand contact to a 1,2-diacyl-sn-glycero-3-phospho-(1'-sn-glycerol).

Belongs to the Lgt family.

The protein localises to the cell inner membrane. It catalyses the reaction L-cysteinyl-[prolipoprotein] + a 1,2-diacyl-sn-glycero-3-phospho-(1'-sn-glycerol) = an S-1,2-diacyl-sn-glyceryl-L-cysteinyl-[prolipoprotein] + sn-glycerol 1-phosphate + H(+). It functions in the pathway protein modification; lipoprotein biosynthesis (diacylglyceryl transfer). Functionally, catalyzes the transfer of the diacylglyceryl group from phosphatidylglycerol to the sulfhydryl group of the N-terminal cysteine of a prolipoprotein, the first step in the formation of mature lipoproteins. The sequence is that of Phosphatidylglycerol--prolipoprotein diacylglyceryl transferase from Enterobacter sp. (strain 638).